The sequence spans 118 residues: Large ribosomal subunit protein uL18 (118 aa).

The protein belongs to the universal ribosomal protein uL18 family. As to quaternary structure, part of the 50S ribosomal subunit; part of the 5S rRNA/L5/L18/L25 subcomplex. Contacts the 5S and 23S rRNAs.

This is one of the proteins that bind and probably mediate the attachment of the 5S RNA into the large ribosomal subunit, where it forms part of the central protuberance. The sequence is that of Large ribosomal subunit protein uL18 from Limosilactobacillus reuteri (strain DSM 20016) (Lactobacillus reuteri).